The sequence spans 298 residues: Heterogeneous nuclear ribonucleoprotein C (298 aa).

Residue Ala2 is modified to N-acetylalanine. Glycyl lysine isopeptide (Lys-Gly) (interchain with G-Cter in SUMO2) cross-links involve residues Lys8, Lys50, Lys89, and Lys94. Positions 16 to 87 (SRVFIGNLNT…QVLDINLAAE (72 aa)) constitute an RRM domain. Phosphoserine is present on Ser108. 2 disordered regions span residues 131 to 177 (PPPP…VKGD) and 204 to 298 (EKEQ…EDDS). Residues 142 to 148 (PSKRQRV) carry the Nuclear localization signal motif. Phosphoserine is present on residues Ser149 and Ser153. The segment covering 162 to 173 (SKSGQRGSSSKS) has biased composition (low complexity). An N6-acetyllysine; alternate modification is found at Lys163. Lys163 participates in a covalent cross-link: Glycyl lysine isopeptide (Lys-Gly) (interchain with G-Cter in SUMO2); alternate. Positions 176 to 211 (GDDLQAIKKELTQIKQKVDSLLESLEKIEKEQSKQA) form a coiled coil. A Glycyl lysine isopeptide (Lys-Gly) (interchain with G-Cter in SUMO2) cross-link involves residue Lys209. Residues Ser214, Ser216, and Ser217 each carry the phosphoserine modification. Residue Lys222 forms a Glycyl lysine isopeptide (Lys-Gly) (interchain with G-Cter in SUMO2) linkage. Residue Lys225 forms a Glycyl lysine isopeptide (Lys-Gly) (interchain with G-Cter in SUMO2); alternate linkage. A Glycyl lysine isopeptide (Lys-Gly) (interchain with G-Cter in SUMO1); alternate cross-link involves residue Lys225. 4 positions are modified to phosphoserine: Ser226, Ser231, Ser232, and Ser234. Over residues 235–246 (VKKDETNVKMES) the composition is skewed to basic and acidic residues. Glycyl lysine isopeptide (Lys-Gly) (interchain with G-Cter in SUMO2) cross-links involve residues Lys236 and Lys237. A Glycyl lysine isopeptide (Lys-Gly) (interchain with G-Cter in SUMO2); alternate cross-link involves residue Lys243. Residue Lys243 forms a Glycyl lysine isopeptide (Lys-Gly) (interchain with G-Cter in SUMO); alternate linkage. Ser246 and Ser253 each carry phosphoserine. A compositionally biased stretch (acidic residues) spans 248–269 (AGADDSAEEGDLLDDDDNEDRG). The segment covering 270–279 (DDQLELKDDE) has biased composition (basic and acidic residues). Over residues 280–298 (KEPEEGEDDRDSANGEDDS) the composition is skewed to acidic residues. Phosphoserine occurs at positions 291 and 298.

Belongs to the RRM HNRPC family. RALY subfamily. As to quaternary structure, tetramer composed of 3 copies of isoform C1 and 1 copy of isoform C2. Assembly of 3 tetramers with bound pre-mRNA gives rise to a 19S complex that interacts with HNRNPA2B1 tetramers. Component of the 40S hnRNP particle. Identified in the spliceosome C complex. Interacts with IGF2BP1. Interacts with PPIA/CYPA. Phosphorylated on Ser-253 and Ser-291 in resting cells. Post-translationally, sumoylated. Sumoylation reduces affinity for mRNA. In terms of processing, ubiquitinated and degraded after nucleo-cytoplasmic transport by YWHAE.

The protein resides in the nucleus. In terms of biological role, binds pre-mRNA and nucleates the assembly of 40S hnRNP particles. Interacts with poly-U tracts in the 3'-UTR or 5'-UTR of mRNA and modulates the stability and the level of translation of bound mRNA molecules. Single HNRNPC tetramers bind 230-240 nucleotides. Trimers of HNRNPC tetramers bind 700 nucleotides. May play a role in the early steps of spliceosome assembly and pre-mRNA splicing. N6-methyladenosine (m6A) has been shown to alter the local structure in mRNAs and long non-coding RNAs (lncRNAs) via a mechanism named 'm(6)A-switch', facilitating binding of HNRNPC, leading to regulation of mRNA splicing. In Rattus norvegicus (Rat), this protein is Heterogeneous nuclear ribonucleoprotein C.